A 285-amino-acid polypeptide reads, in one-letter code: Hydroxyacylglutathione hydrolase, mitochondrial (285 aa).

The transit peptide at 1–10 (MKFLLQQIRN) directs the protein to the mitochondrion. Zn(2+)-binding residues include histidine 69, histidine 71, aspartate 73, histidine 74, histidine 131, aspartate 154, and histidine 198.

The cofactor is Zn(2+).

Its subcellular location is the mitochondrion matrix. It catalyses the reaction an S-(2-hydroxyacyl)glutathione + H2O = a 2-hydroxy carboxylate + glutathione + H(+). The catalysed reaction is (R)-S-lactoylglutathione + H2O = (R)-lactate + glutathione + H(+). It participates in secondary metabolite metabolism; methylglyoxal degradation; (R)-lactate from methylglyoxal: step 2/2. Inhibited by various thiol compounds such as glutathione and coenzyme A. Thiolesterase that catalyzes the hydrolysis of S-D-lactoylglutathione to form glutathione and D-lactic acid. Involved in the metabolism of methylglyoxal, a toxic compound for yeast proliferation, by converting methylglyoxal to lactate via S-D-lactoylglutathione by sequential enzyme reactions catalyzed by glyoxalase I and glyoxalase II. In Saccharomyces cerevisiae (strain ATCC 204508 / S288c) (Baker's yeast), this protein is Hydroxyacylglutathione hydrolase, mitochondrial.